The following is a 247-amino-acid chain: Ribose-5-phosphate isomerase (247 aa).

This sequence belongs to the ribose 5-phosphate isomerase family.

It localises to the cytoplasm. It carries out the reaction aldehydo-D-ribose 5-phosphate = D-ribulose 5-phosphate. The protein operates within carbohydrate degradation; pentose phosphate pathway; D-ribose 5-phosphate from D-ribulose 5-phosphate (non-oxidative stage): step 1/1. This Meyerozyma guilliermondii (strain ATCC 6260 / CBS 566 / DSM 6381 / JCM 1539 / NBRC 10279 / NRRL Y-324) (Yeast) protein is Ribose-5-phosphate isomerase (RKI1).